The following is a 107-amino-acid chain: Ribonuclease P protein component 4 (107 aa).

Residues Cys-62, Cys-65, Cys-87, and Cys-90 each contribute to the Zn(2+) site.

The protein belongs to the eukaryotic/archaeal RNase P protein component 4 family. As to quaternary structure, consists of a catalytic RNA component and at least 4-5 protein subunits. It depends on Zn(2+) as a cofactor.

Its subcellular location is the cytoplasm. It catalyses the reaction Endonucleolytic cleavage of RNA, removing 5'-extranucleotides from tRNA precursor.. Functionally, part of ribonuclease P, a protein complex that generates mature tRNA molecules by cleaving their 5'-ends. The polypeptide is Ribonuclease P protein component 4 (Archaeoglobus fulgidus (strain ATCC 49558 / DSM 4304 / JCM 9628 / NBRC 100126 / VC-16)).